Here is a 312-residue protein sequence, read N- to C-terminus: Probable splicing factor, arginine/serine-rich 1 (312 aa).

An RRM 1 domain is found at 3 to 73 (ARIYIGRLTS…ERVILDYSKP (71 aa)). 2 disordered regions span residues 69–125 (DYSK…GRPY) and 196–312 (KMID…DGDN). The segment covering 74-90 (RGGGGDRGGFGGGGRGG) has biased composition (gly residues). Over residues 103–121 (GRDRFDRYDRGPPRRESRY) the composition is skewed to basic and acidic residues. An RRM 2 domain is found at 129 to 202 (HRVVVENLSS…RKIKMIDDSQ (74 aa)). The span at 206–259 (SRSRSNSRSRSRSRSRDRRRSRSRSSSRSKSRSRSPPKRSRRESKSKSRSRSRS) shows a compositional bias: basic residues.

This sequence belongs to the splicing factor SR family. Post-translationally, extensively phosphorylated on serine residues in the RS domain.

It is found in the nucleus. Plays a functionally redundant role in spermatogenesis and growth rate control. The polypeptide is Probable splicing factor, arginine/serine-rich 1 (rsp-1) (Caenorhabditis elegans).